The sequence spans 290 residues: Bifunctional protein FolD (290 aa).

NADP(+) is bound by residues 174-176 (GHS), isoleucine 199, and isoleucine 240.

This sequence belongs to the tetrahydrofolate dehydrogenase/cyclohydrolase family. In terms of assembly, homodimer.

The catalysed reaction is (6R)-5,10-methylene-5,6,7,8-tetrahydrofolate + NADP(+) = (6R)-5,10-methenyltetrahydrofolate + NADPH. It catalyses the reaction (6R)-5,10-methenyltetrahydrofolate + H2O = (6R)-10-formyltetrahydrofolate + H(+). It functions in the pathway one-carbon metabolism; tetrahydrofolate interconversion. Catalyzes the oxidation of 5,10-methylenetetrahydrofolate to 5,10-methenyltetrahydrofolate and then the hydrolysis of 5,10-methenyltetrahydrofolate to 10-formyltetrahydrofolate. The polypeptide is Bifunctional protein FolD (Methanosarcina acetivorans (strain ATCC 35395 / DSM 2834 / JCM 12185 / C2A)).